We begin with the raw amino-acid sequence, 241 residues long: 4-hydroxy-tetrahydrodipicolinate reductase (241 aa).

Residues 80–82 (ATT) and 104–107 (SANM) each bind NAD(+). Catalysis depends on His-136, which acts as the Proton donor/acceptor. His-137 serves as a coordination point for (S)-2,3,4,5-tetrahydrodipicolinate. Lys-140 acts as the Proton donor in catalysis. 146 to 147 (GT) provides a ligand contact to (S)-2,3,4,5-tetrahydrodipicolinate.

Belongs to the DapB family.

It is found in the cytoplasm. The enzyme catalyses (S)-2,3,4,5-tetrahydrodipicolinate + NAD(+) + H2O = (2S,4S)-4-hydroxy-2,3,4,5-tetrahydrodipicolinate + NADH + H(+). It carries out the reaction (S)-2,3,4,5-tetrahydrodipicolinate + NADP(+) + H2O = (2S,4S)-4-hydroxy-2,3,4,5-tetrahydrodipicolinate + NADPH + H(+). It participates in amino-acid biosynthesis; L-lysine biosynthesis via DAP pathway; (S)-tetrahydrodipicolinate from L-aspartate: step 4/4. Its function is as follows. Catalyzes the conversion of 4-hydroxy-tetrahydrodipicolinate (HTPA) to tetrahydrodipicolinate. This is 4-hydroxy-tetrahydrodipicolinate reductase from Staphylococcus haemolyticus (strain JCSC1435).